The sequence spans 1113 residues: Protein MGA2 (1113 aa).

The interval Thr91–Lys114 is disordered. The residue at position 255 (Ser255) is a Phosphoserine. Polar residues-rich tracts occupy residues Asp344–Arg357 and His437–Phe452. 2 disordered regions span residues Asp344 to Leu376 and His437 to Pro462. Ser467 is subject to Phosphoserine. In terms of domain architecture, IPT/TIG spans Pro530–Gln610. Positions Ile658–Asn687 are disordered. The segment covering Ser663–Asn687 has biased composition (polar residues). ANK repeat units lie at residues Leu719–Asp748 and Phe752–Leu781. The chain crosses the membrane as a helical span at residues Met1037–Ile1054.

The protein localises to the membrane. The protein is Protein MGA2 (MGA2) of Saccharomyces cerevisiae (strain ATCC 204508 / S288c) (Baker's yeast).